A 473-amino-acid polypeptide reads, in one-letter code: Tryptophanase (473 aa).

Residue Lys-270 is modified to N6-(pyridoxal phosphate)lysine.

Belongs to the beta-eliminating lyase family. As to quaternary structure, homotetramer. The cofactor is pyridoxal 5'-phosphate.

The catalysed reaction is L-tryptophan + H2O = indole + pyruvate + NH4(+). It functions in the pathway amino-acid degradation; L-tryptophan degradation via pyruvate pathway; indole and pyruvate from L-tryptophan: step 1/1. This is Tryptophanase from Vibrio vulnificus (strain CMCP6).